A 167-amino-acid chain; its full sequence is Disulfide bond formation protein B (167 aa).

The Cytoplasmic portion of the chain corresponds to 1–12 (MFLNLLDAPRRL). Residues 13–29 (LALVALGCVALLAFGLY) form a helical membrane-spanning segment. The Periplasmic portion of the chain corresponds to 30–47 (LQHVVGLEPCPMCIVQRY). A disulfide bridge connects residues cysteine 39 and cysteine 42. A helical membrane pass occupies residues 48–63 (ALVLVAIVAGLTAITS). The Cytoplasmic portion of the chain corresponds to 64–69 (NKKGLI). Residues 70-87 (TGSGVLLLLAGFGAFVAA) traverse the membrane as a helical segment. At 88 to 143 (RQSFLQWYPPEVASCGRDFYGMIETFPLQRAIPMIFKGSGDCAKVDWTFLGGSIAN) the chain is on the periplasmic side. The cysteines at positions 102 and 129 are disulfide-linked. The helical transmembrane segment at 144–162 (WSFVCFAVIGLTALTLIAR) threads the bilayer. Over 163–167 (LARQR) the chain is Cytoplasmic.

This sequence belongs to the DsbB family.

Its subcellular location is the cell inner membrane. In terms of biological role, required for disulfide bond formation in some periplasmic proteins. Acts by oxidizing the DsbA protein. The protein is Disulfide bond formation protein B of Polaromonas naphthalenivorans (strain CJ2).